A 168-amino-acid chain; its full sequence is Protein GRE1 (168 aa).

Residues 1-168 (MSNLLNKFAD…DDDSGNQGVW (168 aa)) form a disordered region. Basic and acidic residues-rich tracts occupy residues 8 to 20 (FADK…HDER) and 27 to 43 (DQTR…REFR). 2 stretches are compositionally biased toward polar residues: residues 56–81 (NQGN…GNDF) and 120–144 (TSGQ…SNIG).

It localises to the cytoplasm. The protein is Protein GRE1 (GRE1) of Saccharomyces cerevisiae (strain ATCC 204508 / S288c) (Baker's yeast).